Consider the following 146-residue polypeptide: Hemoglobin subunit beta (146 aa).

Valine 1 is subject to N-acetylvaline. Positions 2-146 (HMTDAEKKLV…VANALAHKYH (145 aa)) constitute a Globin domain. Phosphothreonine is present on threonine 12. The residue at position 59 (lysine 59) is an N6-acetyllysine. A heme b-binding site is contributed by histidine 63. Lysine 82 carries the post-translational modification N6-acetyllysine. Histidine 92 is a heme b binding site. Cysteine 93 is subject to S-nitrosocysteine. Lysine 144 is subject to N6-acetyllysine.

It belongs to the globin family. In terms of assembly, tetramer of two alpha and two different beta chains. Two external cysteine residues at beta-16 and beta-52 cause reversible polymerization to octamers and most likely irreversible formation of higher polymers. As to expression, red blood cells.

Functionally, involved in oxygen transport from the lung to the various peripheral tissues. The chain is Hemoglobin subunit beta (HBB) from Echinops telfairi (Lesser hedgehog tenrec).